The chain runs to 603 residues: Elongation factor 4 (603 aa).

In terms of domain architecture, tr-type G spans 6-188; it reads SKIRNFCIIA…QIVKKIPAPT (183 aa). GTP-binding positions include 18 to 23 and 135 to 138; these read DHGKST and NKVD.

The protein belongs to the TRAFAC class translation factor GTPase superfamily. Classic translation factor GTPase family. LepA subfamily.

The protein localises to the cell membrane. The enzyme catalyses GTP + H2O = GDP + phosphate + H(+). Required for accurate and efficient protein synthesis under certain stress conditions. May act as a fidelity factor of the translation reaction, by catalyzing a one-codon backward translocation of tRNAs on improperly translocated ribosomes. Back-translocation proceeds from a post-translocation (POST) complex to a pre-translocation (PRE) complex, thus giving elongation factor G a second chance to translocate the tRNAs correctly. Binds to ribosomes in a GTP-dependent manner. This Agathobacter rectalis (strain ATCC 33656 / DSM 3377 / JCM 17463 / KCTC 5835 / VPI 0990) (Eubacterium rectale) protein is Elongation factor 4.